The following is a 174-amino-acid chain: Large ribosomal subunit protein uL10 (174 aa).

It belongs to the universal ribosomal protein uL10 family. As to quaternary structure, part of the ribosomal stalk of the 50S ribosomal subunit. The N-terminus interacts with L11 and the large rRNA to form the base of the stalk. The C-terminus forms an elongated spine to which L12 dimers bind in a sequential fashion forming a multimeric L10(L12)X complex.

Its function is as follows. Forms part of the ribosomal stalk, playing a central role in the interaction of the ribosome with GTP-bound translation factors. In Methylobacillus flagellatus (strain ATCC 51484 / DSM 6875 / VKM B-1610 / KT), this protein is Large ribosomal subunit protein uL10.